The chain runs to 91 residues: Small ribosomal subunit protein uS19 (91 aa).

This sequence belongs to the universal ribosomal protein uS19 family.

Protein S19 forms a complex with S13 that binds strongly to the 16S ribosomal RNA. The sequence is that of Small ribosomal subunit protein uS19 from Psychrobacter arcticus (strain DSM 17307 / VKM B-2377 / 273-4).